The primary structure comprises 98 residues: uncharacterized protein (98 aa).

This is an uncharacterized protein from Frog virus 3 (isolate Goorha) (FV-3).